Here is a 692-residue protein sequence, read N- to C-terminus: Elongation factor G (692 aa).

The 275-residue stretch at 8-282 folds into the tr-type G domain; sequence ENTRNIGIMA…GVVDYLPSPV (275 aa). Residues 17–24, 81–85, and 135–138 each bind GTP; these read AHIDAGKT, DTPGH, and NKMD.

This sequence belongs to the TRAFAC class translation factor GTPase superfamily. Classic translation factor GTPase family. EF-G/EF-2 subfamily.

It is found in the cytoplasm. Catalyzes the GTP-dependent ribosomal translocation step during translation elongation. During this step, the ribosome changes from the pre-translocational (PRE) to the post-translocational (POST) state as the newly formed A-site-bound peptidyl-tRNA and P-site-bound deacylated tRNA move to the P and E sites, respectively. Catalyzes the coordinated movement of the two tRNA molecules, the mRNA and conformational changes in the ribosome. In Anoxybacillus flavithermus (strain DSM 21510 / WK1), this protein is Elongation factor G.